The chain runs to 215 residues: Eukaryotic translation initiation factor 4E-1 (215 aa).

The disordered stretch occupies residues 1–32 (MAEDTETRPASAGAEEREEGEIADDGDGSSAA). The span at 16–27 (EREEGEIADDGD) shows a compositional bias: acidic residues. EIF4G-binding stretches follow at residues 40 to 43 (HPLE) and 50 to 86 (FDNP…NNIH). Residues 58–63 (RQVAWG), lysine 90, and 108–109 (WE) contribute to the mRNA site. Residues cysteine 113 and cysteine 151 are joined by a disulfide bond. The interval 134-143 (HTLLAMIGEQ) is EIF4G-binding. Residues 158–163 (RQKQER) and 203–207 (KRSDK) contribute to the mRNA site.

The protein belongs to the eukaryotic initiation factor 4E family. In terms of assembly, EIF4F is a multi-subunit complex, the composition of which varies with external and internal environmental conditions. It is composed of at least EIF4A, EIF4E and EIF4G. EIF4E is also known to interact with other partners. In higher plants two isoforms of EIF4F have been identified, named isoform EIF4F and isoform EIF(iso)4F. Isoform EIF4F has subunits p220 and p26, whereas isoform EIF(iso)4F has subunits p82 and p28. In terms of processing, according to the redox status, the Cys-113-Cys-151 disulfide bridge may have a role in regulating protein function by affecting its ability to bind capped mRNA.

The protein localises to the nucleus. It localises to the cytoplasm. Its function is as follows. Component of the protein complex eIF4F, which is involved in the recognition of the mRNA cap, ATP-dependent unwinding of 5'-terminal secondary structure and recruitment of mRNA to the ribosome. Recognizes and binds the 7-methylguanosine-containing mRNA cap during an early step in the initiation of protein synthesis and facilitates ribosome binding by inducing the unwinding of the mRNAs secondary structures. The protein is Eukaryotic translation initiation factor 4E-1 of Triticum aestivum (Wheat).